We begin with the raw amino-acid sequence, 689 residues long: UvrABC system protein C (689 aa).

The 80-residue stretch at 16–95 folds into the GIY-YIG domain; the sequence is TNPGVYRFRD…IKEFAPRFNI (80 aa). The UVR domain occupies 208 to 243; the sequence is KPYIRELTRQMNEAAECMDFETAAARRDDVGALERV. The disordered stretch occupies residues 316–337; that stretch reads LAPAASGRRRTARHGSEDVVGQ.

Belongs to the UvrC family. Interacts with UvrB in an incision complex.

The protein resides in the cytoplasm. The UvrABC repair system catalyzes the recognition and processing of DNA lesions. UvrC both incises the 5' and 3' sides of the lesion. The N-terminal half is responsible for the 3' incision and the C-terminal half is responsible for the 5' incision. This Kocuria rhizophila (strain ATCC 9341 / DSM 348 / NBRC 103217 / DC2201) protein is UvrABC system protein C.